We begin with the raw amino-acid sequence, 608 residues long: Isocitrate dehydrogenase kinase/phosphatase (608 aa).

ATP is bound by residues 328 to 334 (APGIKGL) and K349. Residue D384 is part of the active site.

This sequence belongs to the AceK family.

It is found in the cytoplasm. The enzyme catalyses L-seryl-[isocitrate dehydrogenase] + ATP = O-phospho-L-seryl-[isocitrate dehydrogenase] + ADP + H(+). In terms of biological role, bifunctional enzyme which can phosphorylate or dephosphorylate isocitrate dehydrogenase (IDH) on a specific serine residue. This is a regulatory mechanism which enables bacteria to bypass the Krebs cycle via the glyoxylate shunt in response to the source of carbon. When bacteria are grown on glucose, IDH is fully active and unphosphorylated, but when grown on acetate or ethanol, the activity of IDH declines drastically concomitant with its phosphorylation. The sequence is that of Isocitrate dehydrogenase kinase/phosphatase from Cupriavidus pinatubonensis (strain JMP 134 / LMG 1197) (Cupriavidus necator (strain JMP 134)).